The following is a 274-amino-acid chain: Dermonecrotic toxin SdSicTox-betaIIB1bxii (274 aa).

Histidine 5 is an active-site residue. Positions 25 and 27 each coordinate Mg(2+). Histidine 41 (nucleophile) is an active-site residue. 2 disulfide bridges follow: cysteine 45/cysteine 51 and cysteine 47/cysteine 190. Aspartate 85 serves as a coordination point for Mg(2+).

The protein belongs to the arthropod phospholipase D family. Class II subfamily. Mg(2+) is required as a cofactor. As to expression, expressed by the venom gland.

The protein localises to the secreted. The enzyme catalyses an N-(acyl)-sphingosylphosphocholine = an N-(acyl)-sphingosyl-1,3-cyclic phosphate + choline. It carries out the reaction an N-(acyl)-sphingosylphosphoethanolamine = an N-(acyl)-sphingosyl-1,3-cyclic phosphate + ethanolamine. The catalysed reaction is a 1-acyl-sn-glycero-3-phosphocholine = a 1-acyl-sn-glycero-2,3-cyclic phosphate + choline. It catalyses the reaction a 1-acyl-sn-glycero-3-phosphoethanolamine = a 1-acyl-sn-glycero-2,3-cyclic phosphate + ethanolamine. Functionally, dermonecrotic toxins cleave the phosphodiester linkage between the phosphate and headgroup of certain phospholipids (sphingolipid and lysolipid substrates), forming an alcohol (often choline) and a cyclic phosphate. This toxin acts on sphingomyelin (SM). It may also act on ceramide phosphoethanolamine (CPE), lysophosphatidylcholine (LPC) and lysophosphatidylethanolamine (LPE), but not on lysophosphatidylserine (LPS), and lysophosphatidylglycerol (LPG). It acts by transphosphatidylation, releasing exclusively cyclic phosphate products as second products. Induces dermonecrosis, hemolysis, increased vascular permeability, edema, inflammatory response, and platelet aggregation. This Sicarius cf. damarensis (strain GJB-2008) (Six-eyed sand spider) protein is Dermonecrotic toxin SdSicTox-betaIIB1bxii.